A 228-amino-acid chain; its full sequence is DNA mismatch repair protein MutH (228 aa).

It belongs to the MutH family.

The protein resides in the cytoplasm. Sequence-specific endonuclease that cleaves unmethylated GATC sequences. It is involved in DNA mismatch repair. The chain is DNA mismatch repair protein MutH from Yersinia pseudotuberculosis serotype IB (strain PB1/+).